The chain runs to 370 residues: Queuine tRNA-ribosyltransferase (370 aa).

The active-site Proton acceptor is Asp-92. Substrate contacts are provided by residues 92–96, Asp-146, Gln-190, and Gly-217; that span reads DSGGF. The segment at 248-254 is RNA binding; sequence GVGTPEN. The active-site Nucleophile is Asp-267. Residues Cys-305, Cys-307, Cys-310, and His-336 each coordinate Zn(2+).

It belongs to the queuine tRNA-ribosyltransferase family. Homodimer. Within each dimer, one monomer is responsible for RNA recognition and catalysis, while the other monomer binds to the replacement base PreQ1. Zn(2+) is required as a cofactor.

It catalyses the reaction 7-aminomethyl-7-carbaguanine + guanosine(34) in tRNA = 7-aminomethyl-7-carbaguanosine(34) in tRNA + guanine. It functions in the pathway tRNA modification; tRNA-queuosine biosynthesis. Catalyzes the base-exchange of a guanine (G) residue with the queuine precursor 7-aminomethyl-7-deazaguanine (PreQ1) at position 34 (anticodon wobble position) in tRNAs with GU(N) anticodons (tRNA-Asp, -Asn, -His and -Tyr). Catalysis occurs through a double-displacement mechanism. The nucleophile active site attacks the C1' of nucleotide 34 to detach the guanine base from the RNA, forming a covalent enzyme-RNA intermediate. The proton acceptor active site deprotonates the incoming PreQ1, allowing a nucleophilic attack on the C1' of the ribose to form the product. After dissociation, two additional enzymatic reactions on the tRNA convert PreQ1 to queuine (Q), resulting in the hypermodified nucleoside queuosine (7-(((4,5-cis-dihydroxy-2-cyclopenten-1-yl)amino)methyl)-7-deazaguanosine). The protein is Queuine tRNA-ribosyltransferase of Desulforapulum autotrophicum (strain ATCC 43914 / DSM 3382 / VKM B-1955 / HRM2) (Desulfobacterium autotrophicum).